Here is a 262-residue protein sequence, read N- to C-terminus: Phosphonates import ATP-binding protein PhnC 3 (262 aa).

The ABC transporter domain maps to 3-245; the sequence is IQLECLSVTY…ELNRIYGNAE (243 aa). 36–43 is a binding site for ATP; it reads GASGSGKS.

This sequence belongs to the ABC transporter superfamily. Phosphonates importer (TC 3.A.1.9.1) family. In terms of assembly, the complex is composed of two ATP-binding proteins (PhnC), two transmembrane proteins (PhnE) and a solute-binding protein (PhnD).

It localises to the cell inner membrane. The catalysed reaction is phosphonate(out) + ATP + H2O = phosphonate(in) + ADP + phosphate + H(+). Its function is as follows. Part of the ABC transporter complex PhnCDE involved in phosphonates import. Responsible for energy coupling to the transport system. In Nostoc sp. (strain PCC 7120 / SAG 25.82 / UTEX 2576), this protein is Phosphonates import ATP-binding protein PhnC 3.